A 1117-amino-acid chain; its full sequence is ATP-dependent RNA helicase mtr4 (1117 aa).

Positions 19–86 are disordered; the sequence is KSLKEESKNS…DNQDLIPNND (68 aa). Over residues 65–79 the composition is skewed to basic and acidic residues; it reads SATKRAKIENLKDNQ. The region spanning 207–363 is the Helicase ATP-binding domain; that stretch reads IACIERQESV…WITKIHRQPC (157 aa). Residue 220 to 227 coordinates ATP; the sequence is AHTSAGKT. The DEIH box motif lies at 311 to 314; that stretch reads DEIH. The tract at residues 414–433 is disordered; sequence GDDPAAMATKGNAKKGKTGK. One can recognise a Helicase C-terminal domain in the interval 441-642; it reads DIYKIVKMIM…LSYNMILNLL (202 aa).

The protein belongs to the helicase family. SKI2 subfamily. As to quaternary structure, component of the TRAMP complex composed of at least cid14, mtr4, and air1.

It is found in the nucleus. Its function is as follows. Component of the TRAMP complex which has a poly(A) RNA polymerase activity and is involved in a post-transcriptional quality control mechanism limiting inappropriate expression of genetic information. Polyadenylation is required for the degradative activity of the exosome on several of its nuclear RNA substrates. Required for heterochromatic gene silencing at centromeric repeats by either exosome- or RNAi-mediated degradation of heterochromatic transcripts. The sequence is that of ATP-dependent RNA helicase mtr4 (mtr4) from Schizosaccharomyces pombe (strain 972 / ATCC 24843) (Fission yeast).